Reading from the N-terminus, the 954-residue chain is Bifunctional endo-1,4-beta-xylanase XylA (954 aa).

The or 28, or 29 signal peptide spans 1–27; the sequence is MKLSKIKKVLSGTVSALMIASAAPVVA. One can recognise a GH11 domain in the interval 29-236; the sequence is AADQQTRGNV…SNGSANVKSV (208 aa). E122 acts as the Nucleophile in catalysis. E223 (proton donor) is an active-site residue. Polar residues predominate over residues 233–243; it reads VKSVSVTQGGS. The tract at residues 233 to 628 is disordered; that stretch reads VKSVSVTQGG…NNNNSAGSSD (396 aa). Positions 246–622 are enriched in low complexity; the sequence is NGGQQQNNDW…WNQGQQNNNN (377 aa). The 329-residue stretch at 624–952 folds into the GH10 domain; sequence AGSSDSLKGA…KPAYDRVMAL (329 aa). E774 functions as the Proton donor in the catalytic mechanism. E884 serves as the catalytic Nucleophile.

The protein in the N-terminal section; belongs to the glycosyl hydrolase 11 (cellulase G) family. It in the C-terminal section; belongs to the glycosyl hydrolase 10 (cellulase F) family.

The catalysed reaction is Endohydrolysis of (1-&gt;4)-beta-D-xylosidic linkages in xylans.. Its pathway is glycan degradation; xylan degradation. Xylanase domain releases more xylo-oligosaccharides and GH10 domain more xylose. This chain is Bifunctional endo-1,4-beta-xylanase XylA (xynA), found in Ruminococcus flavefaciens.